The following is a 242-amino-acid chain: ATP synthase subunit a (242 aa).

The next 6 helical transmembrane spans lie at 29 to 49 (SSIY…LAFY), 84 to 104 (FIPL…LGMT), 114 to 134 (IIVT…VGFV), 140 to 160 (FLTL…MIVI), 181 to 201 (MAGH…MIYL), and 203 to 223 (FLPI…AILQ).

The protein belongs to the ATPase A chain family. F-type ATPases have 2 components, CF(1) - the catalytic core - and CF(0) - the membrane proton channel. CF(1) has five subunits: alpha(3), beta(3), gamma(1), delta(1), epsilon(1). CF(0) has three main subunits: a(1), b(2) and c(9-12). The alpha and beta chains form an alternating ring which encloses part of the gamma chain. CF(1) is attached to CF(0) by a central stalk formed by the gamma and epsilon chains, while a peripheral stalk is formed by the delta and b chains.

The protein localises to the cell membrane. Its function is as follows. Key component of the proton channel; it plays a direct role in the translocation of protons across the membrane. In Rickettsia africae (strain ESF-5), this protein is ATP synthase subunit a.